Here is a 404-residue protein sequence, read N- to C-terminus: F-box only protein 12 (404 aa).

The region spanning 1–44 is the F-box domain; sequence MKNSIPIDLIYEILSRLPAKSVARCRCVSKRWRSILRHQVFTEL. The helical transmembrane segment at 383–403 threads the bilayer; it reads LAILFCLFFLLFNYLIRLCWV.

It localises to the membrane. The sequence is that of F-box only protein 12 (FBX12) from Arabidopsis thaliana (Mouse-ear cress).